The sequence spans 122 residues: Histone H2B.1 (122 aa).

Low complexity predominate over residues 1 to 10 (MAPKKAPAAA). The tract at residues 1–28 (MAPKKAPAAAAEKKVKKAPTTEKKNKKK) is disordered. Position 2 is a n,N,N-trimethylalanine (Ala-2). An N6-acetyllysine mark is found at Lys-5 and Lys-42. Lys-116 participates in a covalent cross-link: Glycyl lysine isopeptide (Lys-Gly) (interchain with G-Cter in ubiquitin).

The protein belongs to the histone H2B family. The nucleosome is a histone octamer containing two molecules each of H2A, H2B, H3 and H4 assembled in one H3-H4 heterotetramer and two H2A-H2B heterodimers. The octamer wraps approximately 147 bp of DNA. Post-translationally, acetylation occurs almost exclusively in the MAC. Monoubiquitination to form H2BK115ub1 gives a specific tag for epigenetic transcriptional activation and is also prerequisite for H3K4me and H3K79me formation.

It localises to the nucleus. The protein localises to the chromosome. In terms of biological role, core component of nucleosome. Nucleosomes wrap and compact DNA into chromatin, limiting DNA accessibility to the cellular machineries which require DNA as a template. Histones thereby play a central role in transcription regulation, DNA repair, DNA replication and chromosomal stability. DNA accessibility is regulated via a complex set of post-translational modifications of histones, also called histone code, and nucleosome remodeling. The chain is Histone H2B.1 (HTB1) from Tetrahymena thermophila (strain SB210).